Here is a 444-residue protein sequence, read N- to C-terminus: Phosphoglucosamine mutase (444 aa).

The Phosphoserine intermediate role is filled by Ser102. The Mg(2+) site is built by Ser102, Asp239, Asp241, and Asp243. The residue at position 102 (Ser102) is a Phosphoserine.

It belongs to the phosphohexose mutase family. It depends on Mg(2+) as a cofactor. Post-translationally, activated by phosphorylation.

It carries out the reaction alpha-D-glucosamine 1-phosphate = D-glucosamine 6-phosphate. Catalyzes the conversion of glucosamine-6-phosphate to glucosamine-1-phosphate. The protein is Phosphoglucosamine mutase of Mycolicibacterium paratuberculosis (strain ATCC BAA-968 / K-10) (Mycobacterium paratuberculosis).